We begin with the raw amino-acid sequence, 318 residues long: MALPIIVKWGGQEYSVTTLSEDDTVLDLKQFLKTLTGVLPERQKLLGLKVKGKPAENDVKLGALKLKPNTKIMMMGTREESLEDVLGPPPDNDDVVNDFDIEDEVVEVENREENLLKISRRVKEYKVEILNPPREGKKLLVLDVDYTLFDHRSCAETGVELMRPYLHEFLTSAYEDYDIVIWSATNMKWIEAKMKELGVSTNANYKITFMLDSAAMITVHTPRRGLIDVKPLGVIWGKFSEFYSKKNTIMFDDIGRNFLMNPQNGLKIRPFMKAHLNRDKDKELLKLTQYLKEIAKLDDFLDLNHKYWERYLSKKQGQ.

An N-acetylalanine modification is found at Ala2. A Ubiquitin-like domain is found at 3-81; it reads LPIIVKWGGQ…IMMMGTREES (79 aa). At Lys117 the chain carries N6-acetyllysine. In terms of domain architecture, FCP1 homology spans 133–294; that stretch reads PREGKKLLVL…LKLTQYLKEI (162 aa). Positions 143, 145, and 253 each coordinate Mg(2+).

Requires Mg(2+) as cofactor.

It is found in the nucleus. It carries out the reaction O-phospho-L-seryl-[protein] + H2O = L-seryl-[protein] + phosphate. It catalyses the reaction O-phospho-L-threonyl-[protein] + H2O = L-threonyl-[protein] + phosphate. Functionally, dephosphorylates 26S nuclear proteasomes, thereby decreasing their proteolytic activity. Recruited to the 19S regulatory particle of the 26S proteasome through its interaction with 19S component PSMD2/RPN1. Once recruited, dephosphorylates 19S component PSMC2/RPT1 which impairs PSMC2 ATPase activity and disrupts 26S proteasome assembly. Has also been reported to stimulate the proteolytic activity of the 26S proteasome. The protein is Ubiquitin-like domain-containing CTD phosphatase 1 (UBLCP1) of Bos taurus (Bovine).